Reading from the N-terminus, the 198-residue chain is FMN-dependent NADH:quinone oxidoreductase (198 aa).

FMN contacts are provided by residues serine 10, 16-18 (SQS), 94-97 (MYNF), and 138-141 (TRGG).

Belongs to the azoreductase type 1 family. Homodimer. The cofactor is FMN.

It catalyses the reaction 2 a quinone + NADH + H(+) = 2 a 1,4-benzosemiquinone + NAD(+). It carries out the reaction N,N-dimethyl-1,4-phenylenediamine + anthranilate + 2 NAD(+) = 2-(4-dimethylaminophenyl)diazenylbenzoate + 2 NADH + 2 H(+). Functionally, quinone reductase that provides resistance to thiol-specific stress caused by electrophilic quinones. Its function is as follows. Also exhibits azoreductase activity. Catalyzes the reductive cleavage of the azo bond in aromatic azo compounds to the corresponding amines. This chain is FMN-dependent NADH:quinone oxidoreductase, found in Shewanella baltica (strain OS185).